The primary structure comprises 44 residues: Protein Tat (44 aa).

Positions 1–44 (APEDSQSHQVSLSKQPASQAGGDPTGPKESKKKVESETETDPVP) are disordered. The span at 7-18 (SHQVSLSKQPAS) shows a compositional bias: polar residues. Lys14 participates in a covalent cross-link: Glycyl lysine isopeptide (Lys-Gly) (interchain with G-Cter in ubiquitin). A Cell attachment site motif is present at residues 21 to 23 (GGD). The span at 26-36 (GPKESKKKVES) shows a compositional bias: basic and acidic residues.

The protein belongs to the lentiviruses Tat family. Interacts with host CCNT1. Associates with the P-TEFb complex composed at least of Tat, P-TEFb (CDK9 and CCNT1), TAR RNA, RNA Pol II. Recruits the HATs CREBBP, TAF1/TFIID, EP300, PCAF and GCN5L2. Interacts with host KAT5/Tip60; this interaction targets the latter to degradation. Interacts with the host deacetylase SIRT1. Interacts with host capping enzyme RNGTT; this interaction stimulates RNGTT. Binds to host KDR, and to the host integrins ITGAV/ITGB3 and ITGA5/ITGB1. Interacts with host KPNB1/importin beta-1 without previous binding to KPNA1/importin alpha-1. Interacts with EIF2AK2. Interacts with host nucleosome assembly protein NAP1L1; this interaction may be required for the transport of Tat within the nucleus, since the two proteins interact at the nuclear rim. Interacts with host C1QBP/SF2P32; this interaction involves lysine-acetylated Tat. Interacts with the host chemokine receptors CCR2, CCR3 and CXCR4. Interacts with host DPP4/CD26; this interaction may trigger an anti-proliferative effect. Interacts with host LDLR. Interacts with the host extracellular matrix metalloproteinase MMP1. Interacts with host PRMT6; this interaction mediates Tat's methylation. Interacts with, and is ubiquitinated by MDM2/Hdm2. Interacts with host PSMC3 and HTATIP2. Interacts with STAB1; this interaction may overcome SATB1-mediated repression of IL2 and IL2RA (interleukin) in T cells by binding to the same domain than HDAC1. Interacts (when acetylated) with human CDK13, thereby increasing HIV-1 mRNA splicing and promoting the production of the doubly spliced HIV-1 protein Nef. Post-translationally, acetylation by EP300, CREBBP, GCN5L2/GCN5 and PCAF regulates the transactivation activity of Tat. Phosphorylated by EIF2AK2 on serine and threonine residues adjacent to the basic region important for TAR RNA binding and function. Phosphorylation of Tat by EIF2AK2 is dependent on the prior activation of EIF2AK2 by dsRNA. In terms of processing, asymmetrical arginine methylation by host PRMT6 seems to diminish the transactivation capacity of Tat and affects the interaction with host CCNT1. Post-translationally, polyubiquitination by MDM2 does not target Tat to degradation, but activates its transactivation function and fosters interaction with CCNT1 and TAR RNA.

It localises to the host nucleus. It is found in the host nucleolus. The protein localises to the host cytoplasm. Its subcellular location is the secreted. Functionally, transcriptional activator that increases RNA Pol II processivity, thereby increasing the level of full-length viral transcripts. Recognizes a hairpin structure at the 5'-LTR of the nascent viral mRNAs referred to as the transactivation responsive RNA element (TAR) and recruits the cyclin T1-CDK9 complex (P-TEFb complex) that will in turn hyperphosphorylate the RNA polymerase II to allow efficient elongation. The CDK9 component of P-TEFb and other Tat-activated kinases hyperphosphorylate the C-terminus of RNA Pol II that becomes stabilized and much more processive. Other factors such as HTATSF1/Tat-SF1, SUPT5H/SPT5, and HTATIP2 are also important for Tat's function. Besides its effect on RNA Pol II processivity, Tat induces chromatin remodeling of proviral genes by recruiting the histone acetyltransferases (HATs) CREBBP, EP300 and PCAF to the chromatin. This also contributes to the increase in proviral transcription rate, especially when the provirus integrates in transcriptionally silent region of the host genome. To ensure maximal activation of the LTR, Tat mediates nuclear translocation of NF-kappa-B by interacting with host RELA. Through its interaction with host TBP, Tat may also modulate transcription initiation. Tat can reactivate a latently infected cell by penetrating in it and transactivating its LTR promoter. In the cytoplasm, Tat is thought to act as a translational activator of HIV-1 mRNAs. Its function is as follows. Extracellular circulating Tat can be endocytosed by surrounding uninfected cells via the binding to several surface receptors such as CD26, CXCR4, heparan sulfate proteoglycans (HSPG) or LDLR. Neurons are rarely infected, but they internalize Tat via their LDLR. Endosomal low pH allows Tat to cross the endosome membrane to enter the cytosol and eventually further translocate into the nucleus, thereby inducing severe cell dysfunctions ranging from cell activation to cell death. Through its interaction with nuclear HATs, Tat is potentially able to control the acetylation-dependent cellular gene expression. Tat seems to inhibit the HAT activity of KAT5/Tip60 and TAF1, and consequently modify the expression of specific cellular genes. Modulates the expression of many cellular genes involved in cell survival, proliferation or in coding for cytokines (such as IL10) or cytokine receptors. May be involved in the derepression of host interleukin IL2 expression. Mediates the activation of cyclin-dependent kinases and dysregulation of microtubule network. Tat plays a role in T-cell and neurons apoptosis. Tat induced neurotoxicity and apoptosis probably contribute to neuroAIDS. Host extracellular matrix metalloproteinase MMP1 cleaves Tat and decreases Tat's mediated neurotoxicity. Circulating Tat also acts as a chemokine-like and/or growth factor-like molecule that binds to specific receptors on the surface of the cells, affecting many cellular pathways. In the vascular system, Tat binds to ITGAV/ITGB3 and ITGA5/ITGB1 integrins dimers at the surface of endothelial cells and competes with bFGF for heparin-binding sites, leading to an excess of soluble bFGF. Binds to KDR/VEGFR-2. All these Tat-mediated effects enhance angiogenesis in Kaposi's sarcoma lesions. The chain is Protein Tat from Human immunodeficiency virus type 1 group M subtype B (isolate BRVA) (HIV-1).